The primary structure comprises 363 residues: Aminomethyltransferase (363 aa).

Belongs to the GcvT family. As to quaternary structure, the glycine cleavage system is composed of four proteins: P, T, L and H.

The enzyme catalyses N(6)-[(R)-S(8)-aminomethyldihydrolipoyl]-L-lysyl-[protein] + (6S)-5,6,7,8-tetrahydrofolate = N(6)-[(R)-dihydrolipoyl]-L-lysyl-[protein] + (6R)-5,10-methylene-5,6,7,8-tetrahydrofolate + NH4(+). Its function is as follows. The glycine cleavage system catalyzes the degradation of glycine. This is Aminomethyltransferase from Thioalkalivibrio sulfidiphilus (strain HL-EbGR7).